The chain runs to 1029 residues: Collagen, type I, alpha 1b (1029 aa).

The disordered stretch occupies residues 1-990 (QMSYVDHSKS…KAPDPFRGGH (990 aa)). Pro residues predominate over residues 13-33 (PPQPGPMGPMGPRGPPGPPGS). Over residues 34–57 (SGPQGFTGPPGEPGEPGASGAMGS) the composition is skewed to low complexity. The segment covering 67–81 (NGDDGEPGKPGRPGE) has biased composition (basic and acidic residues). Composition is skewed to low complexity over residues 82–91 (RGAAGPQGAR), 120–129 (VPGVMGARGR), and 136–147 (SGARGNDGNTGP). Gly residues predominate over residues 163 to 182 (PGGAGAKGETGPAGGRGNEG). Low complexity-rich tracts occupy residues 199-223 (AGPA…AGLA), 233-267 (AQGA…PGPA), and 299-309 (ERGAPGARGFP). A compositionally biased stretch (gly residues) spans 310–322 (GADGGAGGKGAPG). Composition is skewed to low complexity over residues 323–351 (ERGA…PGSK) and 429–465 (VGAP…QGAT). Gly residues predominate over residues 466–477 (GETGKGLGGPTG). The span at 478-497 (PRGAPGPAGNDGAKGEPGAA) shows a compositional bias: low complexity. Composition is skewed to gly residues over residues 498 to 507 (GAPGGLGAPG) and 531 to 540 (GGKGGDGAPG). Composition is skewed to low complexity over residues 571–580 (VAGPTGPRGA) and 593–620 (AGFA…KGDA). 2 stretches are compositionally biased toward gly residues: residues 621 to 630 (GAPGPGGPVG) and 645 to 654 (GARGGAGPPG). 5 stretches are compositionally biased toward low complexity: residues 655–665 (ATGFPGPAGRV), 694–722 (ETGA…PGXD), 731–743 (PQGL…LPGQ), 830–839 (APGAVGPSGK), and 855–869 (SGPA…PAGA). Residues 870–884 (KGDRGEAGEAGDRGG) show a composition bias toward basic and acidic residues. Over residues 906 to 934 (PAGASGPAGPRGPAGSNGAPGKDGMNGLP) the composition is skewed to low complexity. Pro residues predominate over residues 952–967 (AGPPGPPGPAGPPGPP). In terms of domain architecture, Fibrillar collagen NC1 spans 999-1029 (TQKLPLLDLAPMDVGAPDQEFGVEVGPVCFL).

Belongs to the fibrillar collagen family.

The protein localises to the secreted. It localises to the extracellular space. Its subcellular location is the extracellular matrix. The polypeptide is Collagen, type I, alpha 1b (Epinephelus aeneus (White grouper)).